Here is a 453-residue protein sequence, read N- to C-terminus: Vitamin D3 receptor A (453 aa).

The nuclear receptor DNA-binding region spans 53–128; sequence PRICGVCGDK…IGMMKEFILT (76 aa). Zn(2+)-binding residues include cysteine 56, cysteine 59, cysteine 73, cysteine 76, cysteine 92, cysteine 98, cysteine 108, and cysteine 111. 2 NR C4-type zinc fingers span residues 56 to 76 and 92 to 111; these read CGVCGDKATGFHFNAMTCEGC and CPFNGNCTITKDNRRHCQAC. The tract at residues 129-158 is hinge; it reads DEEVQRKKDLIMKRKEEEAAREARKPRLSD. One can recognise an NR LBD domain in the interval 159–449; that stretch reads EQMQIINSLV…LTPLVLEVFG (291 aa). Tyrosine 175 and serine 265 together coordinate calcitriol. The tract at residues 274–292 is interaction with coactivator LXXLL motif; that stretch reads KMIPGFRDLTAEDQIALLK. Calcitriol-binding residues include arginine 302, serine 306, histidine 333, and histidine 423. A 9aaTAD motif is present at residues 442-450; sequence PLVLEVFGS.

This sequence belongs to the nuclear hormone receptor family. NR1 subfamily. In terms of assembly, homodimer in the absence of bound vitamin D3. Heterodimer with RXRA after vitamin D3 binding. Interacts with ncoa1 and possibly other coactivators, leading to a strong increase of transcription of target genes. Detected in embryo 24 to 48 hours after fertilization and in gastrula.

The protein localises to the nucleus. It localises to the cytoplasm. Functionally, nuclear receptor for calcitriol, the active form of vitamin D3 which mediates the action of this vitamin on cells. Enters the nucleus upon vitamin D3 binding where it forms heterodimers with the retinoid X receptor/RXR. The VDR-RXR heterodimers bind to specific response elements on DNA and activate the transcription of vitamin D3-responsive target genes. Recruited to promoters via its interaction with BAZ1B/WSTF which mediates the interaction with acetylated histones, an essential step for VDR-promoter association. Plays a central role in calcium homeostasis. This Danio rerio (Zebrafish) protein is Vitamin D3 receptor A (vdra).